The chain runs to 130 residues: Small ribosomal subunit protein uS8 (130 aa).

It belongs to the universal ribosomal protein uS8 family. Part of the 30S ribosomal subunit. Contacts proteins S5 and S12.

Its function is as follows. One of the primary rRNA binding proteins, it binds directly to 16S rRNA central domain where it helps coordinate assembly of the platform of the 30S subunit. The chain is Small ribosomal subunit protein uS8 from Mannheimia succiniciproducens (strain KCTC 0769BP / MBEL55E).